The primary structure comprises 280 residues: MEKKKAMQIEGYPIEGLSIGGHETCIIFPSLRIAFDIGRCPHRAISQDFLFISHSHMDHIGGLPMYVATRGLYKMKPPTIIVPASIKETVESLFEVHRKLDSSELKHNLVGLDIGEEFIIRKDLKVKAFKTFHVIQSQGYVVYSTKYKLKKEYIGLSGNEIKNLKVSGVEITDSIITPEVAFTGDTTSDFVVDETNADALKAKVLVMESTFLDDSVSVEHARDYGHIHISEIVNHAEKFENKAILLIHFSARYTVKEIEDAVSALPPPLEGRVFALTQGF.

Belongs to the RNase Z family. Homodimer. It depends on Zn(2+) as a cofactor. Ca(2+) serves as cofactor. Requires Mn(2+) as cofactor. The cofactor is Mg(2+).

The protein resides in the cytoplasm. The enzyme catalyses Endonucleolytic cleavage of RNA, removing extra 3' nucleotides from tRNA precursor, generating 3' termini of tRNAs. A 3'-hydroxy group is left at the tRNA terminus and a 5'-phosphoryl group is left at the trailer molecule.. Its function is as follows. Zinc phosphodiesterase, which displays tRNA 3'-processing endonuclease activity. Involved in tRNA maturation, by removing a 3'-trailer from precursor tRNA. Can use bis-(p-nitophenyl) phosphate (bpNPP) as substrate. Involved in the processing of small nucleolar RNAs (snoRNAs). This Arabidopsis thaliana (Mouse-ear cress) protein is tRNase Z TRZ1.